We begin with the raw amino-acid sequence, 313 residues long: MSGNLDVLQMKEEDVLKFLAAGTHLGGTNLDFQMDHYVYKRKSDGVYIINLKKTWEKLLLAARAIVAIENPADVCVISSRNTGQRAVLKFASATGATTFHGRFTPGTFTNQIQAAFREPRLLLVTDPRADHQPLTEASYVNIPTIALCNTDSPLRYVDIAIPCNNKGHHSVGLMWWMLAREVLRMRGTISREHPWDVMPDLYFYRDPEEIEKEEQAAAEKAVGKEEFQGEWSAPPAEFAQPEVADWSEGVAVPSVPIQQFAPATAAAAAAAAPPVKTGEVFSEDWSTQPATDDWSTAPTAQASDWGGTTSDWS.

S2 is subject to N-acetylserine. 2 laminin-binding regions span residues 161 to 180 and 205 to 229; these read IPCN…MLAR and RDPE…EFQG. 2 [DE]-W-[ST] repeats span residues 230–232 and 245–247; these read EWS and DWS. The tract at residues 242-313 is laminin-binding; it reads EVADWSEGVA…DWGGTTSDWS (72 aa). Low complexity predominate over residues 262–274; sequence PATAAAAAAAAPP. The disordered stretch occupies residues 262 to 313; the sequence is PATAAAAAAAAPPVKTGEVFSEDWSTQPATDDWSTAPTAQASDWGGTTSDWS. [DE]-W-[ST] repeat units follow at residues 284–286, 293–295, and 311–313; these read DWS. The span at 284-313 shows a compositional bias: polar residues; sequence DWSTQPATDDWSTAPTAQASDWGGTTSDWS.

This sequence belongs to the universal ribosomal protein uS2 family. Monomer (37LRP) and homodimer (67LR). Component of the small ribosomal subunit. Mature ribosomes consist of a small (40S) and a large (60S) subunit. The 40S subunit contains about 33 different proteins and 1 molecule of RNA (18S). The 60S subunit contains about 49 different proteins and 3 molecules of RNA (28S, 5.8S and 5S). Interacts with rps21. Interacts with several laminins including at least lamb1. Interacts with mdk. In terms of processing, acylated. Acylation may be a prerequisite for conversion of the monomeric 37 kDa laminin receptor precursor (37LRP) to the mature dimeric 67 kDa laminin receptor (67LR), and may provide a mechanism for membrane association. Post-translationally, cleaved by stromelysin-3 (ST3) at the cell surface. Cleavage by stromelysin-3 may be a mechanism to alter cell-extracellular matrix interactions.

It is found in the cell membrane. The protein localises to the cytoplasm. Its subcellular location is the nucleus. Its function is as follows. Required for the assembly and/or stability of the 40S ribosomal subunit. Required for the processing of the 20S rRNA-precursor to mature 18S rRNA in a late step of the maturation of 40S ribosomal subunits. Also functions as a cell surface receptor for laminin. Plays a role in cell adhesion to the basement membrane and in the consequent activation of signaling transduction pathways. May play a role in cell fate determination and tissue morphogenesis. This Solea senegalensis (Senegalese sole) protein is Small ribosomal subunit protein uS2 (rpsa).